A 249-amino-acid chain; its full sequence is Mediator of RNA polymerase II transcription subunit 8 (249 aa).

A coiled-coil region spans residues 1-26 (MQREEKQLDMLLEAVLNRLNDLKHSI). Polar residues-rich tracts occupy residues 215 to 224 (SPMSAVSPSG) and 235 to 249 (IKTNIKSANQVHPYR). The segment at 215–249 (SPMSAVSPSGNAPMGKMPSGIKTNIKSANQVHPYR) is disordered.

The protein belongs to the Mediator complex subunit 8 family. As to quaternary structure, component of the Mediator complex.

Its subcellular location is the nucleus. Component of the Mediator complex, a coactivator involved in the regulated transcription of nearly all RNA polymerase II-dependent genes. Mediator functions as a bridge to convey information from gene-specific regulatory proteins to the basal RNA polymerase II transcription machinery. Mediator is recruited to promoters by direct interactions with regulatory proteins and serves as a scaffold for the assembly of a functional preinitiation complex with RNA polymerase II and the general transcription factors. The protein is Mediator of RNA polymerase II transcription subunit 8 (MED8) of Anopheles gambiae (African malaria mosquito).